Consider the following 374-residue polypeptide: Phenoloxidase-activating enzyme 1 (374 aa).

A signal peptide spans 1-19; sequence MWKSLVFFVSALIWSFGSS. The propeptide at 20-120 is activation peptide; the sequence is QDCTTPTGSR…QCGIDTTGDR (101 aa). Residues 21–74 form the Clip domain; the sequence is DCTTPTGSRSNCVSLYQCQPLYNAFEQRPLPTHVVSYLGRSQCGFEGYVPRVCC. Disulfide bonds link Cys-22/Cys-73, Cys-32/Cys-63, and Cys-38/Cys-74. Residues 83–97 are compositionally biased toward polar residues; it reads ATSARPTQAPTQGSS. Positions 83–114 are disordered; the sequence is ATSARPTQAPTQGSSDVFPEDSSPAPRNQCGI. Positions 121–370 constitute a Peptidase S1 domain; sequence VYGGTITDLD…YIDWIQNTIA (250 aa). Cysteines 151 and 167 form a disulfide. Residue His-166 is the Charge relay system of the active site. Glu-186 and Asp-194 together coordinate Ca(2+). Residue Asp-228 is the Charge relay system of the active site. Intrachain disulfides connect Cys-292-Cys-307 and Cys-317-Cys-346. The Charge relay system role is filled by Ser-321.

Belongs to the peptidase S1 family. CLIP subfamily. In terms of processing, activated by the removal of the N-terminal inhibitory propeptide. As to expression, expressed in hemocytes.

It is found in the secreted. With respect to regulation, inhibited by aprotenin. Not inhibited by EDTA, PMSF or leupeptin. Its function is as follows. Serine protease which, by cleaving and activating prophenoloxidase (PPO1) after immune challenge, plays an essential role in the melanization immune response to wounding. This Spodoptera litura (Asian cotton leafworm) protein is Phenoloxidase-activating enzyme 1.